An 828-amino-acid polypeptide reads, in one-letter code: Putative alpha-1,3-mannosyltransferase MNN12 (828 aa).

Residues methionine 1–lysine 13 are Cytoplasmic-facing. The helical transmembrane segment at valine 14–asparagine 34 threads the bilayer. The Lumenal portion of the chain corresponds to tyrosine 35–glutamate 828. A glycan (N-linked (GlcNAc...) asparagine) is linked at asparagine 38. The interval histidine 80 to asparagine 104 is disordered. Residues proline 86–lysine 103 are compositionally biased toward polar residues. Asparagine 247, asparagine 437, and asparagine 591 each carry an N-linked (GlcNAc...) asparagine glycan.

It belongs to the MNN1/MNT family.

The protein resides in the golgi apparatus membrane. The protein operates within protein modification; protein glycosylation. Responsible for addition of the terminal mannose residues to the outer chain of core N-linked polysaccharides and to O-linked mannotriose. Implicated in late Golgi modifications. The protein is Putative alpha-1,3-mannosyltransferase MNN12 (MNN12) of Candida albicans (strain SC5314 / ATCC MYA-2876) (Yeast).